The chain runs to 322 residues: uncharacterized protein (322 aa).

Residues 1-32 (MRDGIGKRAASALFLCGVLVMLAVSSAIVSSA) form the signal peptide.

This is an uncharacterized protein from Bacillus subtilis (strain 168).